The primary structure comprises 961 residues: Outer capsid protein VP2 (961 aa).

Belongs to the orbivirus VP2 family.

Its subcellular location is the virion. Its function is as follows. The VP2 protein is one of the two proteins (with VP5) target of the host immunogenic response. Responsible for viral which constitute the virus particle outer capsid. It is the major attachment to target host cell, probably by binding to sialic acid. This attachment induces virion internalization predominantly through clathrin-dependent endocytosis. In Bluetongue virus 1 (isolate South Africa) (BTV 1), this protein is Outer capsid protein VP2 (Segment-2).